The sequence spans 701 residues: Conserved oligomeric Golgi complex subunit 1 (701 aa).

It belongs to the COG1 family. As to quaternary structure, component of the conserved oligomeric Golgi (COG) complex which consists of eight different proteins cog1-cog8.

It is found in the cytoplasm. Its subcellular location is the nucleus. The protein localises to the golgi apparatus membrane. Functionally, acts as essential component of the peripheral membrane COG complex that is involved in intra-Golgi protein trafficking. COG is located at the cis-Golgi, and regulates tethering of retrograde intra-Golgi vesicles and possibly a number of other membrane trafficking events. The chain is Conserved oligomeric Golgi complex subunit 1 (cog1) from Schizosaccharomyces pombe (strain 972 / ATCC 24843) (Fission yeast).